Reading from the N-terminus, the 712-residue chain is Capsid protein (712 aa).

Disordered regions lie at residues 614–633 (LTSTEEGSPQKKKRRDKEVR) and 646–665 (CWMSPTPETPPKAGKTPESS). A coiled-coil region spans residues 670–706 (YDNHTKLAKRVKKEIHNQNRRHRLLLAHLRRERDRLL).

Belongs to the anelloviridae capsid protein family.

Its subcellular location is the virion. Self-assembles to form an icosahedral capsid with a T=1 symmetry, about 30 nm in diameter, and consisting of 60 capsid proteins. The capsid encapsulates the genomic DNA. Capsid protein is involved in attachment and entry into the host cell. The protein is Capsid protein of Torque teno tamarin virus (isolate So-TTV2).